A 172-amino-acid polypeptide reads, in one-letter code: Inorganic pyrophosphatase (172 aa).

Residues lysine 29, arginine 43, and tyrosine 55 each contribute to the substrate site. The Mg(2+) site is built by aspartate 65, aspartate 70, and aspartate 102. Tyrosine 141 lines the substrate pocket.

The protein belongs to the PPase family. As to quaternary structure, homohexamer. Mg(2+) is required as a cofactor.

Its subcellular location is the cytoplasm. The catalysed reaction is diphosphate + H2O = 2 phosphate + H(+). In terms of biological role, catalyzes the hydrolysis of inorganic pyrophosphate (PPi) forming two phosphate ions. The polypeptide is Inorganic pyrophosphatase (Rickettsia prowazekii (strain Madrid E)).